The chain runs to 390 residues: Protein phosphatase 1B (390 aa).

Residues Met1–Asn14 show a composition bias toward basic and acidic residues. Positions Met1 to Asn20 are disordered. Residue Gly2 is the site of N-myristoyl glycine attachment. Lys12 participates in a covalent cross-link: Glycyl lysine isopeptide (Lys-Gly) (interchain with G-Cter in ISG15). The PPM-type phosphatase domain occupies Arg23 to Phe295. Residues Asp60, Gly61, Asp243, and Asp286 each contribute to the Mn(2+) site. A disordered region spans residues Asn371–Leu390. The residue at position 386 (Ser386) is a Phosphoserine.

Belongs to the PP2C family. As to quaternary structure, monomer. Interacts with PAK6. Interacts with the phosphorylated form of IKBKB/IKKB. Mg(2+) serves as cofactor. The cofactor is Mn(2+). Isgylation negatively regulates its activity. In terms of processing, N-myristoylation is essential for the recognition of its substrates for dephosphorylation.

Its subcellular location is the cytoplasm. It localises to the cytosol. It is found in the membrane. The enzyme catalyses O-phospho-L-seryl-[protein] + H2O = L-seryl-[protein] + phosphate. It carries out the reaction O-phospho-L-threonyl-[protein] + H2O = L-threonyl-[protein] + phosphate. Its function is as follows. Enzyme with a broad specificity. Dephosphorylates PRKAA1 and PRKAA2. Inhibits TBK1-mediated antiviral signaling by dephosphorylating it at 'Ser-172'. Plays an important role in the termination of TNF-alpha-mediated NF-kappa-B activation through dephosphorylating and inactivating IKBKB/IKKB. In Rattus norvegicus (Rat), this protein is Protein phosphatase 1B (Ppm1b).